Here is a 908-residue protein sequence, read N- to C-terminus: Mechanosensitive ion channel protein 8 (908 aa).

Over residues 1-25 the composition is skewed to polar residues; the sequence is MDFRNSFKSHSSYKQIRSPGDQSEP. Disordered regions lie at residues 1–88, 148–172, 190–221, and 242–265; these read MDFR…HTAV, DQENDDVSHQTMPTPTSTARTSFDA, VAGSVPSSSSHSSSSSSATMRTNQDQPQLQEE, and VKTRSRLQDPPREEETPYSGWRSG. Positions 31–70 are enriched in basic and acidic residues; the sequence is PILHDHHPDHSGMVVDDQKPDSTRSSLDDGRNAPVERDAS. 2 stretches are compositionally biased toward polar residues: residues 75 to 85 and 156 to 171; these read QDNTTGTSTDH and HQTMPTPTSTARTSFD. The segment covering 196–206 has biased composition (low complexity); the sequence is SSSSHSSSSSS. The segment covering 207 to 218 has biased composition (polar residues); sequence ATMRTNQDQPQL. Basic and acidic residues predominate over residues 247 to 256; sequence RLQDPPREEE. 6 helical membrane-spanning segments follow: residues 298–318, 341–361, 381–401, 411–431, 673–693, and 709–729; these read AITLLQWLSLVAIIAALACSL, LVLICGRLVSGWGIRIVVFFI, AVQNCLWLGLVLLAWHFLFDK, FLPYVTKILVCFLLSTILWLI, MINIVTAIVIVVIWLVLLEIA, and AFIFGNTVKTVFESIIFLFIV.

This sequence belongs to the MscS (TC 1.A.23) family. Expressed in tricellular and mature pollen, and in germinating tube. Not detected in leaves or roots.

The protein resides in the cell membrane. It is found in the endomembrane system. With respect to regulation, not regulated by MgCl(2), ruthenium red or tetramethylammonium-Cl. In terms of biological role, mechanosensitive channel that opens in response to stretch forces in the membrane lipid bilayer. Exhibits a 6.3-fold preference for chloride over sodium. Regulates osmotic forces during pollen hydration and germination. The chain is Mechanosensitive ion channel protein 8 from Arabidopsis thaliana (Mouse-ear cress).